Here is a 172-residue protein sequence, read N- to C-terminus: Lipoprotein signal peptidase (172 aa).

3 consecutive transmembrane segments (helical) span residues 10-30 (LIWL…KAWV), 68-88 (WQLW…AFWL), and 98-118 (SALP…DRLM). Residues D124 and D142 contribute to the active site. The chain crosses the membrane as a helical span at residues 138–158 (FNIADSAIVGGAIGIAVFGLF).

The protein belongs to the peptidase A8 family.

It is found in the cell inner membrane. The enzyme catalyses Release of signal peptides from bacterial membrane prolipoproteins. Hydrolyzes -Xaa-Yaa-Zaa-|-(S,diacylglyceryl)Cys-, in which Xaa is hydrophobic (preferably Leu), and Yaa (Ala or Ser) and Zaa (Gly or Ala) have small, neutral side chains.. The protein operates within protein modification; lipoprotein biosynthesis (signal peptide cleavage). This protein specifically catalyzes the removal of signal peptides from prolipoproteins. This Xanthomonas euvesicatoria pv. vesicatoria (strain 85-10) (Xanthomonas campestris pv. vesicatoria) protein is Lipoprotein signal peptidase.